The chain runs to 152 residues: Protein FERTILITY RESTORER RF2, mitochondrial (152 aa).

Residues 1-52 constitute a mitochondrion transit peptide; sequence MSTLVTCSLPGAVTTHASTRRFGGSQFQTSQASCISFKREVSAKAVLRSVRC. The segment covering 52-69 has biased composition (polar residues); the sequence is CNATQTQSAQRKSSTATV. The tract at residues 52-101 is disordered; the sequence is CNATQTQSAQRKSSTATVKRSDPKGKTQGPKLDDGSGGFPPFRFGKGGGG.

It localises to the mitochondrion. Functionally, non-functional allele of the RF2 fertility restorer of rice varieties with LD-type cytoplasmic male sterility (CMS). Non-functional RF2 alleles are found in japonica cultivars Taichung 65 and Nipponbare (AC F1SZ44), and is due to the presence of Thr-78 which replaces Ile-78 in the functional allele. Functional allele is found in the japonica cultivars Fukuyama and Owarihatamochi (AC F1SZ42), and indica cultivar Kasalath (AC F1SZ41). The chain is Protein FERTILITY RESTORER RF2, mitochondrial from Oryza sativa subsp. japonica (Rice).